Here is a 57-residue protein sequence, read N- to C-terminus: UPF0337 protein SAV_1088 (57 aa).

Composition is skewed to basic and acidic residues over residues 1–15 (MAGD…EQAK) and 36–57 (QAEK…VFKH). The disordered stretch occupies residues 1-57 (MAGDQKAKAKMEQAKGKAKAAAGRAVGNERMAAEGQAEKSKGDARQAKEKTKDVFKH).

It belongs to the UPF0337 (CsbD) family.

This is UPF0337 protein SAV_1088 from Streptomyces avermitilis (strain ATCC 31267 / DSM 46492 / JCM 5070 / NBRC 14893 / NCIMB 12804 / NRRL 8165 / MA-4680).